Here is a 254-residue protein sequence, read N- to C-terminus: Aspartate/glutamate leucyltransferase (254 aa).

It belongs to the R-transferase family. Bpt subfamily.

The protein resides in the cytoplasm. The enzyme catalyses N-terminal L-glutamyl-[protein] + L-leucyl-tRNA(Leu) = N-terminal L-leucyl-L-glutamyl-[protein] + tRNA(Leu) + H(+). The catalysed reaction is N-terminal L-aspartyl-[protein] + L-leucyl-tRNA(Leu) = N-terminal L-leucyl-L-aspartyl-[protein] + tRNA(Leu) + H(+). Functions in the N-end rule pathway of protein degradation where it conjugates Leu from its aminoacyl-tRNA to the N-termini of proteins containing an N-terminal aspartate or glutamate. This chain is Aspartate/glutamate leucyltransferase, found in Xylella fastidiosa (strain M23).